The following is a 1232-amino-acid chain: DNA-directed RNA polymerase subunit beta (1232 aa).

Positions 1170 to 1232 (SVDEDADELE…LDLDDFGDEH (63 aa)) are disordered. Residues 1171 to 1180 (VDEDADELEV) are compositionally biased toward acidic residues. Residues 1189–1198 (PEEKEEKEKE) show a composition bias toward basic and acidic residues. The span at 1199 to 1232 (DSDEYDDLREEDVEPDLEELSLDDLDLDDFGDEH) shows a compositional bias: acidic residues.

Belongs to the RNA polymerase beta chain family. In terms of assembly, the RNAP catalytic core consists of 2 alpha, 1 beta, 1 beta' and 1 omega subunit. When a sigma factor is associated with the core the holoenzyme is formed, which can initiate transcription.

It catalyses the reaction RNA(n) + a ribonucleoside 5'-triphosphate = RNA(n+1) + diphosphate. In terms of biological role, DNA-dependent RNA polymerase catalyzes the transcription of DNA into RNA using the four ribonucleoside triphosphates as substrates. In Clostridium botulinum (strain Kyoto / Type A2), this protein is DNA-directed RNA polymerase subunit beta.